The following is an 841-amino-acid chain: SLIT and NTRK-like protein 6 (841 aa).

The signal sequence occupies residues 1 to 26; that stretch reads MKLWIHLFYSSLLACISLHSQTPVLS. Residues 27–67 enclose the LRRNT 1 domain; the sequence is SRGSCDSLCNCEEKDGTMLINCEAKGIKMVSEISVPPSRPF. Residues 27-608 lie on the Extracellular side of the membrane; the sequence is SRGSCDSLCN…RSLTDAVPLS (582 aa). 5 LRR repeats span residues 89–110, 113–134, 137–158, 161–182, and 184–205; these read NAISIHLGFNNIADIEIGAFNG, LLKQLHINHNSLEILKEDTFHG, NLEFLQADNNFITVIEPSAFSK, RLKVLILNDNAIESLPPNIFRF, and PLTHLDLRGNQLQTLPYVGFLE. The LRRCT 1 domain occupies 218-269; it reads NKWACNCDLLQLKTWLENMPPQSIIGDVVCNSPPFFKGSILSRLKKESICPT. Residues 320-361 form the LRRNT 2 domain; it reads PSTQLPGPYCPIPCNCKVLSPSGLLIHCQERNIESLSDLRPP. LRR repeat units lie at residues 364 to 385, 388 to 409, 412 to 433, 436 to 457, 460 to 481, and 483 to 504; these read NPRKLILAGNIIHSLMKSDLVE, TLEMLHLGNNRIEVLEEGSFMN, RLQKLYLNGNHLTKLSKGMFLG, NLEYLYLEYNAIKEILPGTFNP, KLKVLYLNNNLLQVLPPHIFSG, and PLTKVNLKTNQFTHLPVSNILD. Residues 517-568 form the LRRCT 2 domain; the sequence is NPWDCSCDLVGLQQWIQKLSKNTVTDDILCTSPGHLDKKELKALNSEILCPG. A helical membrane pass occupies residues 609–629; sequence VLILGLLIMFITIVFCAAGIV. Topologically, residues 630 to 841 are cytoplasmic; it reads VLVLHRRRRY…DYLEVLEQQT (212 aa).

It belongs to the SLITRK family. In adult brain, highly expressed in putamen with no expression in cerebral cortex. Expressed in adult and fetal lung and fetal liver. Also expressed at high levels in some brain tumors including medulloblastomas and primitive neuroectodermal tumors.

Its subcellular location is the cell membrane. In terms of biological role, regulator of neurite outgrowth required for normal hearing and vision. This chain is SLIT and NTRK-like protein 6 (SLITRK6), found in Homo sapiens (Human).